Reading from the N-terminus, the 116-residue chain is Large ribosomal subunit protein bL20c (116 aa).

It belongs to the bacterial ribosomal protein bL20 family.

Its subcellular location is the plastid. It localises to the chloroplast. Binds directly to 23S ribosomal RNA and is necessary for the in vitro assembly process of the 50S ribosomal subunit. It is not involved in the protein synthesizing functions of that subunit. The polypeptide is Large ribosomal subunit protein bL20c (Oltmannsiellopsis viridis (Marine flagellate)).